We begin with the raw amino-acid sequence, 596 residues long: Elongation factor 4 (596 aa).

The tr-type G domain occupies 2–184 (RNIRNFSIIA…AIVHRIPPPK (183 aa)). GTP-binding positions include 14 to 19 (DHGKST) and 131 to 134 (NKID).

This sequence belongs to the TRAFAC class translation factor GTPase superfamily. Classic translation factor GTPase family. LepA subfamily.

Its subcellular location is the cell inner membrane. The enzyme catalyses GTP + H2O = GDP + phosphate + H(+). Required for accurate and efficient protein synthesis under certain stress conditions. May act as a fidelity factor of the translation reaction, by catalyzing a one-codon backward translocation of tRNAs on improperly translocated ribosomes. Back-translocation proceeds from a post-translocation (POST) complex to a pre-translocation (PRE) complex, thus giving elongation factor G a second chance to translocate the tRNAs correctly. Binds to ribosomes in a GTP-dependent manner. The polypeptide is Elongation factor 4 (Xanthomonas euvesicatoria pv. vesicatoria (strain 85-10) (Xanthomonas campestris pv. vesicatoria)).